We begin with the raw amino-acid sequence, 253 residues long: MSTQSRPVVIAGNWKMHMTCAQAKQYAAAFLPQVANAPKDRSIVLAPPFTAISTLQEALAGSDVQIASQNVHWKDSGAFTGEISAEMLLELGVGYTIVGHSEPRKYFSESDEQINQRARASQAAGLIPILCVGESDEQRSSNETERVIRRQVEQGLEGIDPSKLVVAYEPIWAIGTGKTCESEEANRVCGLIRNWVGYPNLTIQYGGSVKPGNIDELMAKSDIDGVLVGGASLEPDSFARIANYQMASAAAAA.

13–15 (NWK) serves as a coordination point for substrate. Catalysis depends on His100, which acts as the Electrophile. Glu169 serves as the catalytic Proton acceptor. Residues Gly175, Ser208, and 229–230 (GG) each bind substrate.

Belongs to the triosephosphate isomerase family. Homodimer.

The protein resides in the cytoplasm. It catalyses the reaction D-glyceraldehyde 3-phosphate = dihydroxyacetone phosphate. Its pathway is carbohydrate biosynthesis; gluconeogenesis. It functions in the pathway carbohydrate degradation; glycolysis; D-glyceraldehyde 3-phosphate from glycerone phosphate: step 1/1. Functionally, involved in the gluconeogenesis. Catalyzes stereospecifically the conversion of dihydroxyacetone phosphate (DHAP) to D-glyceraldehyde-3-phosphate (G3P). The chain is Triosephosphate isomerase from Synechococcus sp. (strain RCC307).